The sequence spans 125 residues: Small ribosomal subunit protein uS12m (125 aa).

Disordered stretches follow at residues 1–50 and 106–125; these read MPTL…SAPR and GIPNRRRGRSKYGAERPKSI. Positions 10–23 are enriched in basic and acidic residues; sequence HGREEKRRTDRTRA.

Belongs to the universal ribosomal protein uS12 family.

The protein resides in the mitochondrion. Its function is as follows. Protein S12 is involved in the translation initiation step. The sequence is that of Small ribosomal subunit protein uS12m (RPS12) from Magnolia soulangeana (Saucer magnolia).